A 387-amino-acid polypeptide reads, in one-letter code: 1-deoxy-D-xylulose 5-phosphate reductoisomerase (387 aa).

NADPH-binding residues include T10, G11, S12, I13, G36, R37, and N124. 1-deoxy-D-xylulose 5-phosphate is bound at residue K125. E126 is a binding site for NADPH. D150 is a Mn(2+) binding site. 4 residues coordinate 1-deoxy-D-xylulose 5-phosphate: S151, E152, S176, and H199. Residue E152 coordinates Mn(2+). Residue G205 coordinates NADPH. 1-deoxy-D-xylulose 5-phosphate is bound by residues S212, N217, K218, and E221. Mn(2+) is bound at residue E221.

It belongs to the DXR family. Requires Mg(2+) as cofactor. It depends on Mn(2+) as a cofactor.

The enzyme catalyses 2-C-methyl-D-erythritol 4-phosphate + NADP(+) = 1-deoxy-D-xylulose 5-phosphate + NADPH + H(+). It participates in isoprenoid biosynthesis; isopentenyl diphosphate biosynthesis via DXP pathway; isopentenyl diphosphate from 1-deoxy-D-xylulose 5-phosphate: step 1/6. In terms of biological role, catalyzes the NADPH-dependent rearrangement and reduction of 1-deoxy-D-xylulose-5-phosphate (DXP) to 2-C-methyl-D-erythritol 4-phosphate (MEP). The chain is 1-deoxy-D-xylulose 5-phosphate reductoisomerase from Cyanothece sp. (strain PCC 7425 / ATCC 29141).